Here is a 213-residue protein sequence, read N- to C-terminus: Orotate phosphoribosyltransferase (213 aa).

Position 26 (Lys26) interacts with 5-phospho-alpha-D-ribose 1-diphosphate. 34 to 35 (FF) serves as a coordination point for orotate. Residues 72–73 (YK), Arg99, Lys100, Lys103, His105, and 124–132 (DDVITAGTA) contribute to the 5-phospho-alpha-D-ribose 1-diphosphate site. 2 residues coordinate orotate: Thr128 and Arg156.

This sequence belongs to the purine/pyrimidine phosphoribosyltransferase family. PyrE subfamily. As to quaternary structure, homodimer. The cofactor is Mg(2+).

It carries out the reaction orotidine 5'-phosphate + diphosphate = orotate + 5-phospho-alpha-D-ribose 1-diphosphate. It functions in the pathway pyrimidine metabolism; UMP biosynthesis via de novo pathway; UMP from orotate: step 1/2. Functionally, catalyzes the transfer of a ribosyl phosphate group from 5-phosphoribose 1-diphosphate to orotate, leading to the formation of orotidine monophosphate (OMP). The polypeptide is Orotate phosphoribosyltransferase (Saccharophagus degradans (strain 2-40 / ATCC 43961 / DSM 17024)).